The primary structure comprises 280 residues: tRNA pseudouridine synthase A (280 aa).

The active-site Nucleophile is aspartate 60. Tyrosine 119 serves as a coordination point for substrate.

This sequence belongs to the tRNA pseudouridine synthase TruA family. Homodimer.

It carries out the reaction uridine(38/39/40) in tRNA = pseudouridine(38/39/40) in tRNA. Its function is as follows. Formation of pseudouridine at positions 38, 39 and 40 in the anticodon stem and loop of transfer RNAs. The protein is tRNA pseudouridine synthase A of Treponema pallidum (strain Nichols).